The following is a 246-amino-acid chain: UDP-N-acetyl-D-mannosaminuronic acid transferase (246 aa).

The protein belongs to the glycosyltransferase 26 family.

It catalyses the reaction UDP-N-acetyl-alpha-D-mannosaminouronate + N-acetyl-alpha-D-glucosaminyl-di-trans,octa-cis-undecaprenyl diphosphate = beta-D-ManNAcA-(1-&gt;4)-alpha-D-GlcNAc-di-trans,octa-cis-undecaprenyl diphosphate + UDP + H(+). Its pathway is bacterial outer membrane biogenesis; enterobacterial common antigen biosynthesis. Its function is as follows. Catalyzes the synthesis of Und-PP-GlcNAc-ManNAcA (Lipid II), the second lipid-linked intermediate involved in enterobacterial common antigen (ECA) synthesis. In Escherichia coli (strain 55989 / EAEC), this protein is UDP-N-acetyl-D-mannosaminuronic acid transferase.